The chain runs to 282 residues: N-acetylaspartate synthetase (282 aa).

A helical transmembrane segment spans residues 103–125 (FLTVMCYVMTKSFTLTFCAPFIL). Residues 110–269 (VMTKSFTLTF…RSPLERLFFQ (160 aa)) enclose the N-acetyltransferase domain.

This sequence belongs to the NAT8 family.

Its subcellular location is the cytoplasm. The protein localises to the microsome membrane. It localises to the mitochondrion membrane. The protein resides in the endoplasmic reticulum membrane. The enzyme catalyses L-aspartate + acetyl-CoA = N-acetyl-L-aspartate + CoA + H(+). Catalyzes the synthesis of N-acetylaspartate acid (NAA) from L-aspartate and acetyl-CoA. The chain is N-acetylaspartate synthetase (nat8l) from Danio rerio (Zebrafish).